Here is a 535-residue protein sequence, read N- to C-terminus: Glutamyl-tRNA reductase 3, chloroplastic (535 aa).

The active-site Nucleophile is cysteine 131. Substrate contacts are provided by residues 131 to 133 (CNR), serine 190, 195 to 197 (EGQ), and glutamine 201. 272-277 (GAGKMG) contacts NADP(+).

It belongs to the glutamyl-tRNA reductase family. Primarily expressed in roots.

It is found in the plastid. Its subcellular location is the chloroplast. It carries out the reaction (S)-4-amino-5-oxopentanoate + tRNA(Glu) + NADP(+) = L-glutamyl-tRNA(Glu) + NADPH + H(+). The protein operates within porphyrin-containing compound metabolism; protoporphyrin-IX biosynthesis; 5-aminolevulinate from L-glutamyl-tRNA(Glu): step 1/2. Functionally, catalyzes the NADPH-dependent reduction of glutamyl-tRNA(Glu) to glutamate 1-semialdehyde (GSA). The chain is Glutamyl-tRNA reductase 3, chloroplastic (HEMA3) from Hordeum vulgare (Barley).